The sequence spans 810 residues: Plasminogen (810 aa).

Positions Met1–Gly19 are cleaved as a signal peptide. The region spanning Glu20–Val98 is the PAN domain. Intrachain disulfides connect Cys49-Cys73, Cys53-Cys61, Cys103-Cys181, Cys124-Cys164, Cys152-Cys176, Cys185-Cys262, Cys188-Cys316, Cys206-Cys245, Cys234-Cys257, Cys275-Cys352, Cys296-Cys335, and Cys324-Cys347. Kringle domains lie at Cys103–Cys181, Glu184–Cys262, and Cys275–Cys352. Polar residues predominate over residues Gln125–Thr141. The interval Gln125 to Glu145 is disordered. Thr136, Asp158, and Arg172 together coordinate L-lysine. The O-linked (GalNAc...) threonine glycan is linked to Thr365. 9 cysteine pairs are disulfide-bonded: Cys377-Cys454, Cys398-Cys437, Cys426-Cys449, Cys481-Cys560, Cys502-Cys543, Cys531-Cys555, Cys567-Cys685, Cys577-Cys585, and Cys607-Cys623. 2 Kringle domains span residues Cys377–Cys454 and Cys481–Cys560. Positions 432 and 445 each coordinate L-lysine. The Peptidase S1 domain occupies Val581–Arg808. Residue Ser597 is modified to Phosphoserine. Catalysis depends on charge relay system residues His622 and Asp665. A Phosphoserine modification is found at Ser688. Disulfide bonds link Cys699–Cys766, Cys729–Cys745, and Cys756–Cys784. The active-site Charge relay system is Ser760.

This sequence belongs to the peptidase S1 family. Plasminogen subfamily. In terms of assembly, interacts with CSPG4 and AMOT. Interacts (via the Kringle domains) with HRG; the interaction tethers PLG to the cell surface and enhances its activation. Interacts (via Kringle 4 domain) with ADA; the interaction stimulates PLG activation when in complex with DPP4. Angiostatin: Interacts with ATP5F1A; the interaction inhibits most of the angiogenic effects of angiostatin. In terms of processing, in the presence of the inhibitor, the activation involves only cleavage after Arg-580, yielding two chains held together by two disulfide bonds. In the absence of the inhibitor, the activation involves additionally the removal of the activation peptide.

It localises to the secreted. The enzyme catalyses Preferential cleavage: Lys-|-Xaa &gt; Arg-|-Xaa, higher selectivity than trypsin. Converts fibrin into soluble products.. Its activity is regulated as follows. Converted into plasmin by plasminogen activators, both plasminogen and its activator being bound to fibrin. Activated with catalytic amounts of streptokinase. Its function is as follows. Plasmin dissolves the fibrin of blood clots and acts as a proteolytic factor in a variety of other processes including embryonic development, tissue remodeling, tumor invasion, and inflammation. In ovulation, weakens the walls of the Graafian follicle. It activates the urokinase-type plasminogen activator, collagenases and several complement zymogens, such as C1, C4 and C5. Cleavage of fibronectin and laminin leads to cell detachment and apoptosis. Also cleaves fibrin, thrombospondin and von Willebrand factor. Its role in tissue remodeling and tumor invasion may be modulated by CSPG4. Binds to cells. The protein is Plasminogen (PLG) of Macaca mulatta (Rhesus macaque).